The primary structure comprises 377 residues: Protein-arginine rhamnosyltransferase (377 aa).

Y15 contacts dTDP-beta-L-rhamnose. The active-site Proton acceptor is the D17. Residues Y193, Q255, and 271 to 275 contribute to the dTDP-beta-L-rhamnose site; that span reads RGEDS. The active site involves E273.

Belongs to the glycosyltransferase 104 family.

The catalysed reaction is dTDP-beta-L-rhamnose + L-arginyl-[protein] = N(omega)-(alpha-L-rhamnosyl)-L-arginyl-[protein] + dTDP + H(+). In terms of biological role, protein-arginine rhamnosyltransferase that catalyzes the transfer of a single rhamnose to elongation factor P (EF-P) on 'Lys-32', a modification required for EF-P-dependent rescue of polyproline stalled ribosomes. In Pseudomonas putida (strain ATCC 47054 / DSM 6125 / CFBP 8728 / NCIMB 11950 / KT2440), this protein is Protein-arginine rhamnosyltransferase.